The chain runs to 510 residues: ATP synthase subunit alpha (510 aa).

170 to 177 (GDRQTGKT) lines the ATP pocket.

The protein belongs to the ATPase alpha/beta chains family. In terms of assembly, F-type ATPases have 2 components, CF(1) - the catalytic core - and CF(0) - the membrane proton channel. CF(1) has five subunits: alpha(3), beta(3), gamma(1), delta(1), epsilon(1). CF(0) has three main subunits: a(1), b(2) and c(9-12). The alpha and beta chains form an alternating ring which encloses part of the gamma chain. CF(1) is attached to CF(0) by a central stalk formed by the gamma and epsilon chains, while a peripheral stalk is formed by the delta and b chains.

The protein localises to the cell inner membrane. The enzyme catalyses ATP + H2O + 4 H(+)(in) = ADP + phosphate + 5 H(+)(out). Its function is as follows. Produces ATP from ADP in the presence of a proton gradient across the membrane. The alpha chain is a regulatory subunit. This Maricaulis maris (strain MCS10) (Caulobacter maris) protein is ATP synthase subunit alpha.